The following is a 370-amino-acid chain: Serine/threonine-protein kinase SAPK5 (370 aa).

In terms of domain architecture, Protein kinase spans 4–260 (YEPVREIGAG…MGEIKSHPWF (257 aa)). ATP is bound by residues 10–18 (IGAGNFGVA) and K33. The active-site Proton acceptor is D123. The tract at residues 312 to 370 (EAQTVPKPDKPVSGYGWGTDDDDDDQQPAEEEDEEDDYDRTVREVHASVDLDMSNLQIS) is disordered. The segment covering 330 to 349 (TDDDDDDQQPAEEEDEEDDY) has biased composition (acidic residues). Over residues 350-360 (DRTVREVHASV) the composition is skewed to basic and acidic residues.

The protein belongs to the protein kinase superfamily. Ser/Thr protein kinase family. Post-translationally, may be phosphorylated. As to expression, expressed in leaf blades, leaf sheaths and roots. Expressed in shoots and roots of young seedlings.

It is found in the cytoplasm. It localises to the nucleus. It catalyses the reaction L-seryl-[protein] + ATP = O-phospho-L-seryl-[protein] + ADP + H(+). The catalysed reaction is L-threonyl-[protein] + ATP = O-phospho-L-threonyl-[protein] + ADP + H(+). With respect to regulation, activated by hyperosmotic stress. In terms of biological role, may play a role in signal transduction of hyperosmotic response. This chain is Serine/threonine-protein kinase SAPK5 (SAPK5), found in Oryza sativa subsp. japonica (Rice).